A 185-amino-acid chain; its full sequence is FK506-binding protein 2 (185 aa).

Residues 1–20 (MQGLLLSLSLLASAAVGVLA) form the signal peptide. The 89-residue stretch at 41-129 (GDKINVHYKG…VFETELVGIE (89 aa)) folds into the PPIase FKBP-type domain. The short motif at 182 to 185 (HNEL) is the Prevents secretion from ER element.

It belongs to the FKBP-type PPIase family. FKBP2 subfamily.

Its subcellular location is the endoplasmic reticulum. The enzyme catalyses [protein]-peptidylproline (omega=180) = [protein]-peptidylproline (omega=0). Its activity is regulated as follows. Inhibited by both FK506 and rapamycin. In terms of biological role, PPIases accelerate the folding of proteins. It catalyzes the cis-trans isomerization of proline imidic peptide bonds in oligopeptides. In Podospora anserina (Pleurage anserina), this protein is FK506-binding protein 2 (FPR2).